The primary structure comprises 412 residues: Multifunctional CCA protein (412 aa).

Residues Gly8 and Arg11 each contribute to the ATP site. Positions 8 and 11 each coordinate CTP. Residues Asp21 and Asp23 each contribute to the Mg(2+) site. ATP contacts are provided by Arg91, Arg137, and Arg140. Residues Arg91, Arg137, and Arg140 each coordinate CTP. The region spanning 228 to 329 (TGIHTLMTLS…VKLFDSIDAW (102 aa)) is the HD domain.

It belongs to the tRNA nucleotidyltransferase/poly(A) polymerase family. Bacterial CCA-adding enzyme type 1 subfamily. Monomer. Can also form homodimers and oligomers. The cofactor is Mg(2+). Ni(2+) is required as a cofactor.

The enzyme catalyses a tRNA precursor + 2 CTP + ATP = a tRNA with a 3' CCA end + 3 diphosphate. The catalysed reaction is a tRNA with a 3' CCA end + 2 CTP + ATP = a tRNA with a 3' CCACCA end + 3 diphosphate. In terms of biological role, catalyzes the addition and repair of the essential 3'-terminal CCA sequence in tRNAs without using a nucleic acid template. Adds these three nucleotides in the order of C, C, and A to the tRNA nucleotide-73, using CTP and ATP as substrates and producing inorganic pyrophosphate. tRNA 3'-terminal CCA addition is required both for tRNA processing and repair. Also involved in tRNA surveillance by mediating tandem CCA addition to generate a CCACCA at the 3' terminus of unstable tRNAs. While stable tRNAs receive only 3'-terminal CCA, unstable tRNAs are marked with CCACCA and rapidly degraded. The protein is Multifunctional CCA protein of Shigella sonnei (strain Ss046).